The chain runs to 110 residues: Large ribosomal subunit protein eL34 (110 aa).

The tract at residues 1-41 (MKNVLIHKGATYKTRSNRRRKVRTPSGKLVNRRVKKHSKKH) is disordered. The span at 30-41 (VNRRVKKHSKKH) shows a compositional bias: basic residues.

The protein belongs to the eukaryotic ribosomal protein eL34 family.

This chain is Large ribosomal subunit protein eL34 (RPL34), found in Encephalitozoon cuniculi (strain GB-M1) (Microsporidian parasite).